The following is a 109-amino-acid chain: Flagellar hook-basal body complex protein FliE (109 aa).

Residues 1–38 (MQAIHNDKSLLSPFSELNTDNRTKREESGSTFKEQKGG) form a disordered region. The segment covering 19-38 (TDNRTKREESGSTFKEQKGG) has biased composition (basic and acidic residues).

The protein belongs to the FliE family.

The protein localises to the bacterial flagellum basal body. This chain is Flagellar hook-basal body complex protein FliE, found in Helicobacter pylori (strain P12).